The primary structure comprises 179 residues: Large ribosomal subunit protein uL5 (179 aa).

It belongs to the universal ribosomal protein uL5 family. Part of the 50S ribosomal subunit; part of the 5S rRNA/L5/L18/L25 subcomplex. Contacts the 5S rRNA and the P site tRNA. Forms a bridge to the 30S subunit in the 70S ribosome.

Its function is as follows. This is one of the proteins that bind and probably mediate the attachment of the 5S RNA into the large ribosomal subunit, where it forms part of the central protuberance. In the 70S ribosome it contacts protein S13 of the 30S subunit (bridge B1b), connecting the 2 subunits; this bridge is implicated in subunit movement. Contacts the P site tRNA; the 5S rRNA and some of its associated proteins might help stabilize positioning of ribosome-bound tRNAs. The sequence is that of Large ribosomal subunit protein uL5 from Prochlorococcus marinus (strain MIT 9303).